The sequence spans 217 residues: Zinc finger CCHC-type and RNA-binding motif-containing protein 1 (217 aa).

One can recognise an RRM domain in the interval 10–88 (STVYVSNLPF…RVIKASIAID (79 aa)). The segment at 105-122 (SKCYECGESGHLSYACPK) adopts a CCHC-type zinc-finger fold. The tract at residues 120–217 (CPKNMLGERE…YFSDEEELSD (98 aa)) is disordered. Residues 145–163 (PEEEIEEVEVSEEEGEDPA) are compositionally biased toward acidic residues. Serine 155, serine 210, and serine 216 each carry phosphoserine.

As to quaternary structure, component of the U11/U12 snRNPs that are part of the U12-type spliceosome. Interacts with ZRSR1.

It localises to the nucleus. The protein localises to the nucleoplasm. This Rattus norvegicus (Rat) protein is Zinc finger CCHC-type and RNA-binding motif-containing protein 1 (Zcrb1).